Consider the following 463-residue polypeptide: Argininosuccinate lyase (463 aa).

The protein belongs to the lyase 1 family. Argininosuccinate lyase subfamily.

It is found in the cytoplasm. The catalysed reaction is 2-(N(omega)-L-arginino)succinate = fumarate + L-arginine. It functions in the pathway amino-acid biosynthesis; L-arginine biosynthesis; L-arginine from L-ornithine and carbamoyl phosphate: step 3/3. The chain is Argininosuccinate lyase from Methylorubrum populi (strain ATCC BAA-705 / NCIMB 13946 / BJ001) (Methylobacterium populi).